The chain runs to 615 residues: 1-deoxy-D-xylulose-5-phosphate synthase (615 aa).

Residues H76 and 117-119 (GHS) each bind thiamine diphosphate. D148 is a binding site for Mg(2+). Thiamine diphosphate-binding positions include 149 to 150 (GA), N177, Y284, and E365. Residue N177 coordinates Mg(2+).

The protein belongs to the transketolase family. DXPS subfamily. Homodimer. It depends on Mg(2+) as a cofactor. Thiamine diphosphate is required as a cofactor.

The enzyme catalyses D-glyceraldehyde 3-phosphate + pyruvate + H(+) = 1-deoxy-D-xylulose 5-phosphate + CO2. It participates in metabolic intermediate biosynthesis; 1-deoxy-D-xylulose 5-phosphate biosynthesis; 1-deoxy-D-xylulose 5-phosphate from D-glyceraldehyde 3-phosphate and pyruvate: step 1/1. Its function is as follows. Catalyzes the acyloin condensation reaction between C atoms 2 and 3 of pyruvate and glyceraldehyde 3-phosphate to yield 1-deoxy-D-xylulose-5-phosphate (DXP). This Francisella tularensis subsp. novicida (strain U112) protein is 1-deoxy-D-xylulose-5-phosphate synthase.